Here is a 1484-residue protein sequence, read N- to C-terminus: Ral GTPase-activating protein subunit beta (1484 aa).

2 disordered regions span residues 355-437 and 699-728; these read PRSD…APRR and ENNL…PDSE. Phosphoserine is present on S359. Residues T363 and T379 each carry the phosphothreonine modification. Polar residues-rich tracts occupy residues 369–381, 392–428, and 701–725; these read SMPQ…TTPP, NKAT…TSSE, and NLKS…PTTP. Phosphoserine is present on residues S421 and S710. T724 is modified (phosphothreonine). Positions 1138–1382 constitute a Rap-GAP domain; that stretch reads IGYLDLLPCR…TTLEKEVPVI (245 aa). S1275 bears the Phosphoserine mark. A disordered region spans residues 1297–1325; the sequence is PNHTDSLNSSQRLSPSSRMKKLPQGRPVP. The span at 1302–1313 shows a compositional bias: low complexity; sequence SLNSSQRLSPSS.

In terms of assembly, component of the heterodimeric RalGAP1 complex with RALGAPA1 and of the heterodimeric RalGAP2 complex with RALGAPA2. Heterodimerization is required for activity. Abundantly expressed in testis, pancreas, lung, thymus, brown fat, and white fat. Expressed at lower levels in the brain.

In terms of biological role, non-catalytic subunit of the heterodimeric RalGAP1 and RalGAP2 complexes which act as GTPase activators for the Ras-like small GTPases RALA and RALB. In Mus musculus (Mouse), this protein is Ral GTPase-activating protein subunit beta (Ralgapb).